We begin with the raw amino-acid sequence, 65 residues long: Conotoxin VnMLCL-041 (65 aa).

Residues 1–19 form the signal peptide; that stretch reads MLCLPVFIILLLLASPAAP. A propeptide spanning residues 20 to 43 is cleaved from the precursor; the sequence is NPLQTRIQSNLIRAGPEDANIKTD. At Lys64 the chain carries Lysine amide.

Belongs to the conotoxin T superfamily. In terms of tissue distribution, expressed by the venom duct.

It is found in the secreted. In Conus ventricosus (Mediterranean cone), this protein is Conotoxin VnMLCL-041.